An 880-amino-acid polypeptide reads, in one-letter code: Pyruvate, phosphate dikinase (880 aa).

The segment at 1–348 (MNKLIYYFGN…LYILQTRTAK (348 aa)) is N-terminal. Arg-97 lines the ATP pocket. Residues 349–405 (RTAIAAINIAVQMVKEKLISKEQALMRIDPESLNQLLHTRIDYSKGLTSIAEGLPAS) are linker 1. Residues 406–503 (PGAATGIVVF…VIKQGDIITI (98 aa)) are central. Thr-458 is subject to Phosphothreonine; by PDRP1. The active-site Tele-phosphohistidine intermediate is His-460. The segment at 504-538 (DGGSGKIFLGEMPLIQPTFSEESKLILDWADEISS) is linker 2. The C-terminal stretch occupies residues 539 to 880 (LKVRANAETV…AAQAKIKQGS (342 aa)). The substrate site is built by Arg-566, Arg-622, Glu-750, Gly-771, Thr-772, Asn-773, and Asp-774. Position 750 (Glu-750) interacts with Mg(2+). Mg(2+) is bound at residue Asp-774. Cys-836 serves as the catalytic Proton donor.

It belongs to the PEP-utilizing enzyme family. In terms of assembly, homodimer. Mg(2+) is required as a cofactor. Post-translationally, phosphorylation of Thr-458 in the dark inactivates the enzyme. Dephosphorylation upon light stimulation reactivates the enzyme.

It catalyses the reaction pyruvate + phosphate + ATP = phosphoenolpyruvate + AMP + diphosphate + H(+). Its activity is regulated as follows. Activated by light-induced dephosphorylation. Inhibited by dark-induced phosphorylation. Both reactions are catalyzed by PDRP1. In terms of biological role, catalyzes the reversible phosphorylation of pyruvate and phosphate. This chain is Pyruvate, phosphate dikinase (ppdK), found in Rickettsia prowazekii (strain Madrid E).